A 640-amino-acid chain; its full sequence is Threonine--tRNA ligase (640 aa).

Residues 1–61 (MPTITLPDGS…ERDASLQIIT (61 aa)) enclose the TGS domain. Positions 242-533 (DHRRIGKQLD…LIEHYAGAFP (292 aa)) are catalytic. 3 residues coordinate Zn(2+): C333, H384, and H510.

Belongs to the class-II aminoacyl-tRNA synthetase family. As to quaternary structure, homodimer. It depends on Zn(2+) as a cofactor.

It localises to the cytoplasm. It catalyses the reaction tRNA(Thr) + L-threonine + ATP = L-threonyl-tRNA(Thr) + AMP + diphosphate + H(+). Its function is as follows. Catalyzes the attachment of threonine to tRNA(Thr) in a two-step reaction: L-threonine is first activated by ATP to form Thr-AMP and then transferred to the acceptor end of tRNA(Thr). Also edits incorrectly charged L-seryl-tRNA(Thr). The chain is Threonine--tRNA ligase from Stutzerimonas stutzeri (strain A1501) (Pseudomonas stutzeri).